The sequence spans 364 residues: Methylthioribose-1-phosphate isomerase (364 aa).

Substrate is bound by residues 53-55 (RGA), arginine 90, and glutamine 203. Aspartate 244 functions as the Proton donor in the catalytic mechanism. 254–255 (NK) contacts substrate.

The protein belongs to the eIF-2B alpha/beta/delta subunits family. MtnA subfamily.

The catalysed reaction is 5-(methylsulfanyl)-alpha-D-ribose 1-phosphate = 5-(methylsulfanyl)-D-ribulose 1-phosphate. It functions in the pathway amino-acid biosynthesis; L-methionine biosynthesis via salvage pathway; L-methionine from S-methyl-5-thio-alpha-D-ribose 1-phosphate: step 1/6. Its function is as follows. Catalyzes the interconversion of methylthioribose-1-phosphate (MTR-1-P) into methylthioribulose-1-phosphate (MTRu-1-P). The sequence is that of Methylthioribose-1-phosphate isomerase from Rhizobium meliloti (strain 1021) (Ensifer meliloti).